Consider the following 303-residue polypeptide: N-acetylmuramic acid 6-phosphate etherase (303 aa).

A disordered region spans residues 1–21; it reads MQPSQLRSLTTESRNPNTMGI. In terms of domain architecture, SIS spans 58-221; that stretch reads AYDSISNGGR…STSVMIRQGK (164 aa). Glu-86 functions as the Proton donor in the catalytic mechanism. Residue Glu-117 is part of the active site.

Belongs to the GCKR-like family. MurNAc-6-P etherase subfamily. In terms of assembly, homodimer.

It carries out the reaction N-acetyl-D-muramate 6-phosphate + H2O = N-acetyl-D-glucosamine 6-phosphate + (R)-lactate. Its pathway is amino-sugar metabolism; N-acetylmuramate degradation. In terms of biological role, specifically catalyzes the cleavage of the D-lactyl ether substituent of MurNAc 6-phosphate, producing GlcNAc 6-phosphate and D-lactate. This is N-acetylmuramic acid 6-phosphate etherase from Bacillus pumilus (strain SAFR-032).